We begin with the raw amino-acid sequence, 319 residues long: G-protein coupled receptor 171 (319 aa).

Over 1–21 the chain is Extracellular; the sequence is MTNSSTFCPVYRDLEPFTYFF. Asn3 carries an N-linked (GlcNAc...) asparagine glycan. The chain crosses the membrane as a helical span at residues 22–42; the sequence is YLVFLIGIIGSCFATWAFIQK. Residues 43–48 are Cytoplasmic-facing; sequence NTNHRC. The chain crosses the membrane as a helical span at residues 49-69; that stretch reads VSIYLINLLTADFLLTLALPV. The Extracellular segment spans residues 70–89; it reads KITVDLGVAPWKLRIFHCQV. Residues 90–110 traverse the membrane as a helical segment; sequence TACLIYINMYLSIIFLAFVSI. At 111–132 the chain is on the cytoplasmic side; that stretch reads DRCLQLTYSCKIYRIQEPGFAK. The helical transmembrane segment at 133–153 threads the bilayer; it reads MISAVVWLMVLLIMVPNMIIP. The Extracellular portion of the chain corresponds to 154–181; sequence IKDIKEKPNVGCMEFKSEFGRNWHLLTN. A helical transmembrane segment spans residues 182-202; that stretch reads FISIAIFFNFSAIILISNCLV. At 203–224 the chain is on the cytoplasmic side; sequence IRQLYRNKDNENYPNVKRALIS. Residues 225-245 traverse the membrane as a helical segment; sequence ILLVTTGYIICFVPYHIVRIP. At 246-268 the chain is on the extracellular side; that stretch reads YTLSQTEVISDCSTRISLFKAKE. The helical transmembrane segment at 269-289 threads the bilayer; that stretch reads ATLLLAVSNLCFDPILYYHLS. The Cytoplasmic segment spans residues 290 to 319; sequence KAFRLKITETFASHKESKAQKEKPRSENNA.

Belongs to the G-protein coupled receptor 1 family.

The protein resides in the cell membrane. In terms of biological role, G-protein coupled receptor for Big LEN, a 16-amino acid neuropeptide produced from the precursor protein, proSAAS (encoded by PCSK1N). Acts through a G(i)-alpha-mediated pathway in response to bigLEN. Big LEN-GPR171 system plays an important role in regulating feeding and metabolism. Also plays a role in modulating fear and anxiety-like behaviors in the basolateral amygdala. Big LEN-GPR171 modulates the mu-type opioid receptor signaling and antinociception. Acts as a negative regulator T cell function. The polypeptide is G-protein coupled receptor 171 (GPR171) (Bos taurus (Bovine)).